The primary structure comprises 579 residues: Protein inscuteable homolog (579 aa).

The segment at 74 to 89 (SVQRWMEDLKLMTECE) is important for interaction with GPSM2. Residues 576–579 (ESFV) carry the PDZ-binding motif.

Interacts with ALS2CR19/PAR3B and GPSM1/AGS3. Interacts with F2RL2/PAR3. Interacts with GPSM2/LGN (via TPR repeat region). Expressed in brain, kidney, liver, testis and skin.

Its subcellular location is the cytoplasm. The protein localises to the cell cortex. Its function is as follows. May function as an adapter linking the Par3 complex to the GPSM1/GPSM2 complex. Involved in spindle orientation during mitosis. May regulate cell proliferation and differentiation in the developing nervous system. May play a role in the asymmetric division of fibroblasts and participate in the process of stratification of the squamous epithelium. The chain is Protein inscuteable homolog (Insc) from Mus musculus (Mouse).